Here is a 582-residue protein sequence, read N- to C-terminus: uncharacterized protein (582 aa).

Residues 20–40 (GFWALGLFGAAINAFSAVLIV) traverse the membrane as a helical segment.

The protein localises to the membrane. This is an uncharacterized protein from Mycoplasma pneumoniae (strain ATCC 29342 / M129 / Subtype 1) (Mycoplasmoides pneumoniae).